We begin with the raw amino-acid sequence, 138 residues long: Protein NrdI (138 aa).

The protein belongs to the NrdI family.

Its function is as follows. Probably involved in ribonucleotide reductase function. The protein is Protein NrdI of Paracoccus denitrificans (strain Pd 1222).